A 456-amino-acid polypeptide reads, in one-letter code: Bifunctional protein GlmU (456 aa).

The pyrophosphorylase stretch occupies residues 1 to 229 (MSSHAMSVVI…LSEVEGVNNR (229 aa)). UDP-N-acetyl-alpha-D-glucosamine-binding positions include 11-14 (LAAG), Lys-25, Gln-76, 81-82 (GT), 103-105 (YGD), Gly-140, Glu-154, Asn-169, and Asn-227. Mg(2+) is bound at residue Asp-105. A Mg(2+)-binding site is contributed by Asn-227. The segment at 230–250 (LQLARLEHVYQAEQAEKLLLA) is linker. An N-acetyltransferase region spans residues 251–456 (GVMLRDPARF…QGWRRPVKKK (206 aa)). The UDP-N-acetyl-alpha-D-glucosamine site is built by Arg-333 and Lys-351. His-363 (proton acceptor) is an active-site residue. Residues Tyr-366 and Asn-377 each coordinate UDP-N-acetyl-alpha-D-glucosamine. Residues Ala-380, 386 to 387 (NY), Ser-405, Ala-423, and Arg-440 contribute to the acetyl-CoA site.

The protein in the N-terminal section; belongs to the N-acetylglucosamine-1-phosphate uridyltransferase family. This sequence in the C-terminal section; belongs to the transferase hexapeptide repeat family. As to quaternary structure, homotrimer. Requires Mg(2+) as cofactor.

The protein resides in the cytoplasm. It carries out the reaction alpha-D-glucosamine 1-phosphate + acetyl-CoA = N-acetyl-alpha-D-glucosamine 1-phosphate + CoA + H(+). The enzyme catalyses N-acetyl-alpha-D-glucosamine 1-phosphate + UTP + H(+) = UDP-N-acetyl-alpha-D-glucosamine + diphosphate. It participates in nucleotide-sugar biosynthesis; UDP-N-acetyl-alpha-D-glucosamine biosynthesis; N-acetyl-alpha-D-glucosamine 1-phosphate from alpha-D-glucosamine 6-phosphate (route II): step 2/2. Its pathway is nucleotide-sugar biosynthesis; UDP-N-acetyl-alpha-D-glucosamine biosynthesis; UDP-N-acetyl-alpha-D-glucosamine from N-acetyl-alpha-D-glucosamine 1-phosphate: step 1/1. It functions in the pathway bacterial outer membrane biogenesis; LPS lipid A biosynthesis. Functionally, catalyzes the last two sequential reactions in the de novo biosynthetic pathway for UDP-N-acetylglucosamine (UDP-GlcNAc). The C-terminal domain catalyzes the transfer of acetyl group from acetyl coenzyme A to glucosamine-1-phosphate (GlcN-1-P) to produce N-acetylglucosamine-1-phosphate (GlcNAc-1-P), which is converted into UDP-GlcNAc by the transfer of uridine 5-monophosphate (from uridine 5-triphosphate), a reaction catalyzed by the N-terminal domain. The polypeptide is Bifunctional protein GlmU (Cronobacter sakazakii (strain ATCC BAA-894) (Enterobacter sakazakii)).